A 109-amino-acid chain; its full sequence is Translation initiation factor IF-1, chloroplastic (109 aa).

Positions 18–93 (KSLNQEKENL…TRGRIIYRLK (76 aa)) constitute an S1-like domain.

It belongs to the IF-1 family. In terms of assembly, component of the 30S ribosomal translation pre-initiation complex which assembles on the 30S ribosome in the order IF-2 and IF-3, IF-1 and N-formylmethionyl-tRNA(fMet); mRNA recruitment can occur at any time during PIC assembly.

It localises to the plastid. It is found in the chloroplast. In terms of biological role, one of the essential components for the initiation of protein synthesis. Stabilizes the binding of IF-2 and IF-3 on the 30S subunit to which N-formylmethionyl-tRNA(fMet) subsequently binds. Helps modulate mRNA selection, yielding the 30S pre-initiation complex (PIC). Upon addition of the 50S ribosomal subunit IF-1, IF-2 and IF-3 are released leaving the mature 70S translation initiation complex. The protein is Translation initiation factor IF-1, chloroplastic of Tupiella akineta (Green alga).